Reading from the N-terminus, the 169-residue chain is Disulfide bond formation protein B (169 aa).

Over 1-14 (MNNLTLSLRRERRL) the chain is Cytoplasmic. A helical membrane pass occupies residues 15–31 (LVLLALVCLALLAGALY). The Periplasmic segment spans residues 32 to 49 (LQYVKNEDPCPLCIIQRY). The cysteines at positions 41 and 44 are disulfide-linked. The chain crosses the membrane as a helical span at residues 50–64 (FFVLIAVFAFIGAGM). The Cytoplasmic portion of the chain corresponds to 65-71 (ASGAGVA). A helical transmembrane segment spans residues 72–89 (VTEALIVLSAAAGVGTAA). At 90-144 (RHLYVQLNPGFSCGFDALQPVVDSLPPARWLPGVFKVAGLCETVYPPIFGILLPG) the chain is on the periplasmic side. Residues Cys-102 and Cys-130 are joined by a disulfide bond. A helical membrane pass occupies residues 145–163 (WALIAFVLIAVPVAVSLLR). At 164 to 169 (HRGRLR) the chain is on the cytoplasmic side.

It belongs to the DsbB family.

It localises to the cell inner membrane. Required for disulfide bond formation in some periplasmic proteins. Acts by oxidizing the DsbA protein. This is Disulfide bond formation protein B from Burkholderia mallei (strain ATCC 23344).